The primary structure comprises 432 residues: Methylenetetrahydrofolate--tRNA-(uracil-5-)-methyltransferase TrmFO (432 aa).

7–12 (GGGLAG) is a binding site for FAD.

This sequence belongs to the MnmG family. TrmFO subfamily. FAD serves as cofactor.

The protein localises to the cytoplasm. The enzyme catalyses uridine(54) in tRNA + (6R)-5,10-methylene-5,6,7,8-tetrahydrofolate + NADH + H(+) = 5-methyluridine(54) in tRNA + (6S)-5,6,7,8-tetrahydrofolate + NAD(+). It catalyses the reaction uridine(54) in tRNA + (6R)-5,10-methylene-5,6,7,8-tetrahydrofolate + NADPH + H(+) = 5-methyluridine(54) in tRNA + (6S)-5,6,7,8-tetrahydrofolate + NADP(+). Functionally, catalyzes the folate-dependent formation of 5-methyl-uridine at position 54 (M-5-U54) in all tRNAs. The sequence is that of Methylenetetrahydrofolate--tRNA-(uracil-5-)-methyltransferase TrmFO from Coprothermobacter proteolyticus (strain ATCC 35245 / DSM 5265 / OCM 4 / BT).